The chain runs to 209 residues: MDQQKIPQATAKRLPLYYRFIQNLSLSGKQRVSSAELSEAVKVDSATIRRDFSYFGALGKKGYGYNVNYLLSFFRETLDQDDITRVALIGVGNLGTAFLHYNFTKNNNTKIEMAFDVSEEKVGTEIGGIPVYHLDELEERLSTDIQVAILTVPATVAQSVADRLAETNVHGILNFTPARLNVSENIRIHHIDLAVELQTLVYFLKNYPQ.

Positions 16-55 form a DNA-binding region, H-T-H motif; it reads LYYRFIQNLSLSGKQRVSSAELSEAVKVDSATIRRDFSYF. 90–95 contributes to the NAD(+) binding site; the sequence is GVGNLG.

This sequence belongs to the transcriptional regulatory Rex family. In terms of assembly, homodimer.

It localises to the cytoplasm. In terms of biological role, modulates transcription in response to changes in cellular NADH/NAD(+) redox state. This Bacillus mycoides (strain KBAB4) (Bacillus weihenstephanensis) protein is Redox-sensing transcriptional repressor Rex.